Here is a 176-residue protein sequence, read N- to C-terminus: CDP-archaeol synthase (176 aa).

The next 5 membrane-spanning stretches (helical) occupy residues Phe12–Leu32, Gly60–Cys80, Ile85–Ile105, Pro118–Ile138, and Phe141–Ile161.

Belongs to the CDP-archaeol synthase family. Mg(2+) serves as cofactor.

The protein resides in the cell membrane. The catalysed reaction is 2,3-bis-O-(geranylgeranyl)-sn-glycerol 1-phosphate + CTP + H(+) = CDP-2,3-bis-O-(geranylgeranyl)-sn-glycerol + diphosphate. It functions in the pathway membrane lipid metabolism; glycerophospholipid metabolism. Catalyzes the formation of CDP-2,3-bis-(O-geranylgeranyl)-sn-glycerol (CDP-archaeol) from 2,3-bis-(O-geranylgeranyl)-sn-glycerol 1-phosphate (DGGGP) and CTP. This reaction is the third ether-bond-formation step in the biosynthesis of archaeal membrane lipids. This Staphylothermus marinus (strain ATCC 43588 / DSM 3639 / JCM 9404 / F1) protein is CDP-archaeol synthase.